Here is an 847-residue protein sequence, read N- to C-terminus: Lethal(3)malignant brain tumor-like protein 1 (847 aa).

Composition is skewed to basic and acidic residues over residues 65–82 (FPRE…EKGV) and 144–155 (AVKEGHAKKDGD). Disordered regions lie at residues 65-87 (FPRE…SEPI), 142-163 (AEAV…PTSR), and 237-296 (VKKR…SEEK). MBT repeat units follow at residues 300-400 (WSWA…LQPP), 408-507 (FSWT…LTPP), and 516-611 (FIWE…LQPP). The tract at residues 473-480 (FDNWDDTY) is interaction with monomethylated and dimethylated peptides. The CCHHC-type zinc-finger motif lies at 639 to 682 (SKYSFHHRKCPTPGCDGSGHVTGRFTAHYCLSGCPLAEKNQGKL). Zn(2+) is bound by residues C648, C653, H666, and C672. Residues 778–842 (WTIDEVFSFV…YNAILMFKNA (65 aa)) form the SAM domain.

Homodimer.

The protein resides in the nucleus. Its function is as follows. Polycomb group (PcG) protein that specifically recognizes and binds mono- and dimethyllysine residues on target proteins, thereby acting as a 'reader' of a network of post-translational modifications. PcG proteins maintain the transcriptionally repressive state of genes: acts as a chromatin compaction factor by recognizing and binding mono- and dimethylated histone H1b/H1-4 at 'Lys-26' (H1bK26me1 and H1bK26me2) and histone H4 at 'Lys-20' (H4K20me1 and H4K20me2), leading to condense chromatin and repress transcription. This Gallus gallus (Chicken) protein is Lethal(3)malignant brain tumor-like protein 1 (L3MBTL1).